The chain runs to 359 residues: MMP endo-(1,4)-3-O-methyl-alpha-D-mannosidase (359 aa).

In terms of assembly, monomer in solution.

The catalysed reaction is Endohydrolysis of 3-O-methyl-alpha-D-mannosyl-(1-&gt;4)-3-O-methyl-D-mannose linkages within (1,4)-3-O-methyl-alpha-D-mannnan substrates.. Its function is as follows. Hydrolase involved in the biosynthesis of 3-O-methylmannose polysaccharides (MMP), which are intracellular polymethylated polysaccharides implicated in the modulation of fatty acid metabolism in non-tuberculous mycobacteria. Highly specific hydrolase that catalyzes the internal cleavage of MMP. Is able to hydrolyze purified MMP into distinct lower order oligomannosides but does not cleave acylated or deacylated forms of 6-O-methylglucose lipopolysaccharide (MGLP), beta-mannans, synthetic 4alpha-oligomannosides or its own reaction products. Products were identified as four distinct oligomannosides differing in the number of mannose units (4 to 8) and methylation pattern (free or methylated C1-OH). Might serve as a recycling enzyme that hydrolyzes mature MMP into defined-size smaller oligomannosides that are, in turn, substrates for ManT and MeT1 activities for further processing into new daughter MMP chains. The polypeptide is MMP endo-(1,4)-3-O-methyl-alpha-D-mannosidase (Mycolicibacterium hassiacum (strain DSM 44199 / CIP 105218 / JCM 12690 / 3849) (Mycobacterium hassiacum)).